We begin with the raw amino-acid sequence, 416 residues long: Serine hydroxymethyltransferase (416 aa).

(6S)-5,6,7,8-tetrahydrofolate-binding positions include leucine 121 and 125–127 (GHL). Lysine 230 carries the post-translational modification N6-(pyridoxal phosphate)lysine.

The protein belongs to the SHMT family. Homodimer. Requires pyridoxal 5'-phosphate as cofactor.

Its subcellular location is the cytoplasm. The enzyme catalyses (6R)-5,10-methylene-5,6,7,8-tetrahydrofolate + glycine + H2O = (6S)-5,6,7,8-tetrahydrofolate + L-serine. It participates in one-carbon metabolism; tetrahydrofolate interconversion. The protein operates within amino-acid biosynthesis; glycine biosynthesis; glycine from L-serine: step 1/1. Functionally, catalyzes the reversible interconversion of serine and glycine with tetrahydrofolate (THF) serving as the one-carbon carrier. This reaction serves as the major source of one-carbon groups required for the biosynthesis of purines, thymidylate, methionine, and other important biomolecules. Also exhibits THF-independent aldolase activity toward beta-hydroxyamino acids, producing glycine and aldehydes, via a retro-aldol mechanism. The protein is Serine hydroxymethyltransferase of Nitrosomonas eutropha (strain DSM 101675 / C91 / Nm57).